The sequence spans 253 residues: Giant extracellular hemoglobin linker 1 chain (253 aa).

The LDL-receptor class A domain occupies 89–131; sequence HHCDDDHLSCKDVAFTCIGHNLVCDGHKDCLNGHDEDEETCSI. 3 disulfides stabilise this stretch: Cys91-Cys105, Cys98-Cys118, and Cys112-Cys129.

In terms of assembly, disulfide-linked dimer of identical chains. A model is proposed for the subunit structure of the Tylorrhynchus hemoglobin, consisting of 216 polypeptide chains, 192 heme-containing chains, and 24 linker chains.

Acts as a linker for the assembly of heme-containing chains in the construction of giant hemoglobin. In Tylorrhynchus heterochetus (Japanese palolo worm), this protein is Giant extracellular hemoglobin linker 1 chain.